We begin with the raw amino-acid sequence, 959 residues long: Translation initiation factor IF-2 (959 aa).

The segment covering 1 to 10 (MSDKTNDDKT) has biased composition (basic and acidic residues). The interval 1–374 (MSDKTNDDKT…SQMQETREKI (374 aa)) is disordered. The segment covering 27 to 37 (EQSTVRQNFSH) has biased composition (polar residues). 2 stretches are compositionally biased toward low complexity: residues 63-118 (AAAA…VTKP) and 128-138 (QRPGGQQAQRP). Composition is skewed to basic and acidic residues over residues 154-225 (SEMD…EAAK) and 232-241 (ARSERRDDAR). A compositionally biased stretch (low complexity) spans 246–284 (GARPQQAGRPQGGRPQPAGRPQQGSPRPAPIIADAAPIA). The span at 318–333 (PEVRAPKVVKGEDDRR) shows a compositional bias: basic and acidic residues. One can recognise a tr-type G domain in the interval 457-626 (SRPPVVTIMG…LLQAEMLDLK (170 aa)). The G1 stretch occupies residues 466–473 (GHVDHGKT). 466 to 473 (GHVDHGKT) serves as a coordination point for GTP. The segment at 491–495 (GITQH) is G2. Residues 512-515 (DTPG) are G3. GTP contacts are provided by residues 512–516 (DTPGH) and 566–569 (NKID). The tract at residues 566–569 (NKID) is G4. The G5 stretch occupies residues 602–604 (SAK).

This sequence belongs to the TRAFAC class translation factor GTPase superfamily. Classic translation factor GTPase family. IF-2 subfamily.

The protein resides in the cytoplasm. Its function is as follows. One of the essential components for the initiation of protein synthesis. Protects formylmethionyl-tRNA from spontaneous hydrolysis and promotes its binding to the 30S ribosomal subunits. Also involved in the hydrolysis of GTP during the formation of the 70S ribosomal complex. The sequence is that of Translation initiation factor IF-2 from Brucella melitensis biotype 1 (strain ATCC 23456 / CCUG 17765 / NCTC 10094 / 16M).